The primary structure comprises 103 residues: Small ribosomal subunit protein uS10 (103 aa).

This sequence belongs to the universal ribosomal protein uS10 family. Part of the 30S ribosomal subunit.

Involved in the binding of tRNA to the ribosomes. This chain is Small ribosomal subunit protein uS10, found in Cellvibrio japonicus (strain Ueda107) (Pseudomonas fluorescens subsp. cellulosa).